A 265-amino-acid chain; its full sequence is Basic leucine zipper 6 (265 aa).

Disordered regions lie at residues 1–24 and 77–139; these read MAQL…SAGG and LMSM…RDPK. The segment covering 85 to 97 has biased composition (low complexity); it reads GGSSAPGSDNGGS. Positions 122-132 are enriched in polar residues; sequence TQEQAAATSPT. Residues 137-189 form the bZIP domain; sequence DPKRVKRILANRQSAQRSRVRKLQYISELERSVTTLQNEVSVLSPRVAFLDQQ. Residues 139-158 are basic motif; it reads KRVKRILANRQSAQRSRVRK. Positions 165–186 are leucine-zipper; the sequence is LERSVTTLQNEVSVLSPRVAFL. The tract at residues 239-265 is disordered; it reads LSGGLAADHAHVHGGPPPVRAEKELMS.

As to expression, expressed in roots, shoots and panicles.

It localises to the nucleus. Transcription regulator. This chain is Basic leucine zipper 6 (BZIP06), found in Oryza sativa subsp. japonica (Rice).